The sequence spans 350 residues: Probable aldo-keto reductase 1 (350 aa).

The Proton donor role is filled by tyrosine 67. Substrate is bound at residue histidine 135. 214 to 224 (SPLGKGFFSSG) lines the NADP(+) pocket.

It belongs to the aldo/keto reductase family.

This is Probable aldo-keto reductase 1 from Oryza sativa subsp. indica (Rice).